The chain runs to 388 residues: T-cell surface glycoprotein CD1e, membrane-associated (388 aa).

Residues M1–A19 form the signal peptide. Residues A20–A31 constitute a propeptide, removed in sCD1e. Residues N47 and N84 are each glycosylated (N-linked (GlcNAc...) asparagine). An Ig-like domain is found at P191 to W301. C230 and C285 are oxidised to a cystine. The helical transmembrane segment at S305–V325 threads the bilayer.

In terms of assembly, heterodimer with B2M (beta-2-microglobulin). The association with B2M appears to be facilitated by the presence of the propeptide. Mono-ubiquitinated. Post-translationally, proteolytically cleaved in late endosomes to yield a soluble form. Expressed on cortical thymocytes, dendritic cells, Langerhans cells, on certain T-cell leukemias, and in various other tissues.

The protein resides in the golgi apparatus membrane. The protein localises to the early endosome. It is found in the late endosome. It localises to the lysosome lumen. In terms of biological role, T-cell surface glycoprotein CD1e, soluble binds diacetylated lipids, including phosphatidyl inositides and diacylated sulfoglycolipids, and is required for the presentation of glycolipid antigens on the cell surface. The membrane-associated form is not active. This chain is T-cell surface glycoprotein CD1e, membrane-associated (CD1E), found in Homo sapiens (Human).